The chain runs to 184 residues: MSSSYFIATRASKFLSYVLRHRPDSIGVTLDAQGWADVSELLTKAAAAGMALTLDELKQVVAENDKKRFVLNDDATRIRAAQGHSVDVDLQLPVKAPPPVLYHGTVGKSMADIRKQGLTPMNRHDVHLSPDRETATRVATRRGKPVILVIETYPLLRDGYQFRVSDNGVWLVPEVPAKYIKFPG.

This sequence belongs to the KptA/TPT1 family.

In terms of biological role, removes the 2'-phosphate from RNA via an intermediate in which the phosphate is ADP-ribosylated by NAD followed by a presumed transesterification to release the RNA and generate ADP-ribose 1''-2''-cyclic phosphate (APPR&gt;P). May function as an ADP-ribosylase. This Burkholderia pseudomallei (strain K96243) protein is Probable RNA 2'-phosphotransferase.